Reading from the N-terminus, the 230-residue chain is MSQSPIELKGSSFTLSVIHLHHTDPAIVRNALEEKVSQAPAFLKNAPVVINVAALSREINWRQMQQAILATGLHIVGVSGCKDERLKQTIARSGLPVLNEGKEQKNSADTPPIAALPVQTTAKTRLISTPVRSGQQIYAKDCDLIITSSVSAGAELIADGNIHIYGMMRGRALAGANGDKNCQIFCTSLSAELVSIAGNYWIMDQIPAEFFGKASRLCLQDGALTIQALN.

The protein belongs to the MinC family. Interacts with MinD and FtsZ.

Its function is as follows. Cell division inhibitor that blocks the formation of polar Z ring septums. Rapidly oscillates between the poles of the cell to destabilize FtsZ filaments that have formed before they mature into polar Z rings. Prevents FtsZ polymerization. This Erwinia tasmaniensis (strain DSM 17950 / CFBP 7177 / CIP 109463 / NCPPB 4357 / Et1/99) protein is Probable septum site-determining protein MinC.